A 392-amino-acid chain; its full sequence is Homoserine O-acetyltransferase (392 aa).

The AB hydrolase-1 domain occupies 52–356; the sequence is NVVVVLHALT…ICGHDGFLVE (305 aa). Catalysis depends on serine 157, which acts as the Nucleophile. Arginine 227 contributes to the substrate binding site. Active-site residues include aspartate 320 and histidine 350. Residue aspartate 351 participates in substrate binding. Positions 373 to 392 are disordered; it reads SQSAGPGGAGPGSRKGTTRR.

Belongs to the AB hydrolase superfamily. MetX family. As to quaternary structure, homodimer.

It localises to the cytoplasm. The enzyme catalyses L-homoserine + acetyl-CoA = O-acetyl-L-homoserine + CoA. It participates in amino-acid biosynthesis; L-methionine biosynthesis via de novo pathway; O-acetyl-L-homoserine from L-homoserine: step 1/1. In terms of biological role, transfers an acetyl group from acetyl-CoA to L-homoserine, forming acetyl-L-homoserine. The protein is Homoserine O-acetyltransferase of Mycolicibacterium paratuberculosis (strain ATCC BAA-968 / K-10) (Mycobacterium paratuberculosis).